The following is a 623-amino-acid chain: MGGSSRRQRSTSATRRDDKRRRRQCFSSVADDEEETTSIYGVSSIFIWILATSSLILVISSPSSNTSIQSSSYDRITTKHLLDNISPTFKMYTDSNNRNFDEVNHQHQQEQDFNGQSKYDYPQFNRPMGLRWRDDQRMMEYFMSNGPVETVPVMPILTEHPPASPFGRGPSTERPTTSSRYEYSSPSLEDIDLIDVLWRSDIAGEKGTRQVAPADQYECDLQTLTEKSTVAPLTAEENARYEDLSKGFYNGFFESFNNNQYQQKHQQQQREQIKTPTLEHPTQKAELEDDLFDEDLAQLFEDVSREEGQLNQLFDNKQQHPVINNVSLSEGIVYNQANLTEMQEMRDSCNQVSISTIPTTSTAQPETLFNVTDSQTVEQWLPTEVVPNDVFPTSNYAYIGMQNDSLQAVVSNGQIDYDHSYQSTGQTPLSPLIIGSSGRQQQTQTSPGSVTVTATATQSLFDPYHSQRHSFSDCTTDSSSTCSRLSSESPRYTSESSTGTHESRFYGKLAPSSGSRYQRSSSPRSSQSSIKIARVVPLASGQRKRGRQSKDEQLASDNELPVSAFQISEMSLSELQQVLKNESLSEYQRQLIRKIRRRGKNKVAARTCRQRRTDRHDKMSHYI.

Disordered stretches follow at residues 1–29, 158–184, 421–451, and 467–557; these read MGGSSRRQRSTSATRRDDKRRRRQCFSSV, TEHPPASPFGRGPSTERPTTSSRYEYS, YQSTGQTPLSPLIIGSSGRQQQTQTSPGSVT, and QRHS…LASD. A Phosphoserine; by pmk-1 modification is found at S164. A compositionally biased stretch (polar residues) spans 173 to 184; it reads ERPTTSSRYEYS. Residue S430 is modified to Phosphoserine; by pmk-1. Composition is skewed to low complexity over residues 435 to 449, 472 to 498, and 511 to 529; these read GSSGRQQQTQTSPGS, SDCTTDSSSTCSRLSSESPRYTSESST, and PSSGSRYQRSSSPRSSQSS. Residues 540 to 623 form a basic motif region; the sequence is SGQRKRGRQS…DRHDKMSHYI (84 aa).

Belongs to the bZIP family. Skn1 subfamily. As to quaternary structure, monomer. Interacts with GATA factor elt-3; interaction may enhance transcriptional activation of target genes. In terms of assembly, interacts with pgma-5. Interacts with transcription factor mxl-3 (via N-terminus). In terms of processing, cleaved by the aspartic protease ddi-1. As to expression, postembryonic intestinal cells.

It is found in the nucleus. The protein resides in the cytoplasm. Its subcellular location is the mitochondrion. Transcription factor. Required to specify the fate of ventral blastomeres in the early embryo, and postembryonically for the development of the intestine. Directly regulates expression of zygotically expressed med-1 and med-2 to direct mesendoderm development. In response to oxidative stress and anoxia, required to up-regulate expression of stl-1 mRNA. Involved in regulating innate immunity, acting downstream of the pmk-1 p38/MAPK pathway and probably also downstream of nipi-3. Required for the up-regulation of phase II detoxification genes, including gcs-1 and several glutathione-S-transferase mRNAs in response to oxidative stress generated during pathogenic bacterial infection. Modulates oxidative stress responses in concert with transcription factors such as hcf-1 and elt-3. Regulates the transcription of genes associated with metabolism in response to changes in nutrient availability. In neurons, involved in mitochondrial fusion and behavioral recovery during reoxygenation. Required for riok-1 mRNA expression in the intestine. Downstream of the let-60/Ras, mek-2 and pmk-1 pathway, positively regulates lifespan probably by preventing transcription of insulin-like peptides such as ins-39. Prevents degeneration of dopaminergic CEP neurons in response to high Al(3+) or Mn(2+) levels, probably by promoting the expression of glutathione-S-transferase gst-1. Functionally, directed by the ER-associated degradation pathway (ERAD), mediates proteasomal homeostasis by regulating the expression of proteasomal subunits such as rpt-3 to confer resistance to proteasomal dysfunction. This chain is Protein skinhead-1 (skn-1), found in Caenorhabditis elegans.